The chain runs to 881 residues: Alanine--tRNA ligase (881 aa).

Zn(2+)-binding residues include His-566, His-570, Cys-668, and His-672.

Belongs to the class-II aminoacyl-tRNA synthetase family. Zn(2+) serves as cofactor.

The protein resides in the cytoplasm. The enzyme catalyses tRNA(Ala) + L-alanine + ATP = L-alanyl-tRNA(Ala) + AMP + diphosphate. Catalyzes the attachment of alanine to tRNA(Ala) in a two-step reaction: alanine is first activated by ATP to form Ala-AMP and then transferred to the acceptor end of tRNA(Ala). Also edits incorrectly charged Ser-tRNA(Ala) and Gly-tRNA(Ala) via its editing domain. The protein is Alanine--tRNA ligase of Frankia casuarinae (strain DSM 45818 / CECT 9043 / HFP020203 / CcI3).